Reading from the N-terminus, the 79-residue chain is MKKAYPVINRVECKACERCIIACPRKVLYMSNKINERGYHYVEYRGEGCNGCGNCYYTCPEINAIEVHIERCEDGDTDG.

4Fe-4S ferredoxin-type domains are found at residues 4–33 (AYPV…MSNK) and 40–70 (HYVE…VHIE). [4Fe-4S] cluster contacts are provided by cysteine 13, cysteine 16, cysteine 19, cysteine 23, cysteine 49, cysteine 52, cysteine 55, and cysteine 59.

Heterotrimer of the VorA, VorB and VorC subunits. [4Fe-4S] cluster serves as cofactor.

It carries out the reaction 3-methyl-2-oxobutanoate + 2 oxidized [2Fe-2S]-[ferredoxin] + CoA = 2-methylpropanoyl-CoA + 2 reduced [2Fe-2S]-[ferredoxin] + CO2 + H(+). The polypeptide is Ketoisovalerate oxidoreductase subunit VorC (vorC) (Methanothermobacter marburgensis (strain ATCC BAA-927 / DSM 2133 / JCM 14651 / NBRC 100331 / OCM 82 / Marburg) (Methanobacterium thermoautotrophicum)).